A 79-amino-acid chain; its full sequence is Cell division protein ZapB (79 aa).

The stretch at 4-78 (EVFEKLESKV…LRALLGKMEE (75 aa)) forms a coiled coil.

It belongs to the ZapB family. As to quaternary structure, homodimer. The ends of the coiled-coil dimer bind to each other, forming polymers. Interacts with FtsZ.

It is found in the cytoplasm. Non-essential, abundant cell division factor that is required for proper Z-ring formation. It is recruited early to the divisome by direct interaction with FtsZ, stimulating Z-ring assembly and thereby promoting cell division earlier in the cell cycle. Its recruitment to the Z-ring requires functional FtsA or ZipA. The polypeptide is Cell division protein ZapB (Serratia proteamaculans (strain 568)).